Reading from the N-terminus, the 96-residue chain is Protein RnfH (96 aa).

Belongs to the UPF0125 (RnfH) family.

This is Protein RnfH from Escherichia coli O17:K52:H18 (strain UMN026 / ExPEC).